The following is a 480-amino-acid chain: MVSKPFQRPFSLATRLTFFISLATIAAFFAFAWIMIHSVKVHFAEQDINDLKEISATLERVLNHPDETQARRLMTLEDIVSGYSNVLISLADSHGKTVYHSPGAPDIREFTRDAIPDKDAQGGEVYLLSGPTMMMPGHGHGHMEHSNWRMINLPVGPLVDGKPIYTLYIALSIDFHLHYINDLMNKLIMTASVISILIVFIVLLAVHKGHAPIRSVSRQIQNITSKDLDVRLDPQTVPIELEQLVLSFNHMIERIEDVFTRQSNFSADIAHEIRTPITNLITQTEIALSQSRSQKELEDVLYSNLEELTRMAKMVSDMLFLAQADNNQLIPEKKMLNLADEVGKVFDFFEALAEDRGVELRFVGDECQVAGDPLMLRRALSNLLSNALRYTPTGETIVVRCQTVDHLVQVTVENPGTPIAPEHLPRLFDRFYRVDPSRQRKGEGSGIGLAIVKSIVVAHKGTVAVTSDVRGTRFVIILPA.

Over 1 to 15 (MVSKPFQRPFSLATR) the chain is Cytoplasmic. Residues 16–36 (LTFFISLATIAAFFAFAWIMI) traverse the membrane as a helical segment. The Periplasmic portion of the chain corresponds to 37–186 (HSVKVHFAEQ…LHYINDLMNK (150 aa)). Residues 187–207 (LIMTASVISILIVFIVLLAVH) traverse the membrane as a helical segment. An HAMP domain is found at 207-260 (HKGHAPIRSVSRQIQNITSKDLDVRLDPQTVPIELEQLVLSFNHMIERIEDVFT). Residues 208–480 (KGHAPIRSVS…GTRFVIILPA (273 aa)) lie on the Cytoplasmic side of the membrane. In terms of domain architecture, Histidine kinase spans 268–480 (DIAHEIRTPI…GTRFVIILPA (213 aa)). The residue at position 271 (His-271) is a Phosphohistidine; by autocatalysis.

In terms of processing, autophosphorylated.

The protein localises to the cell inner membrane. The catalysed reaction is ATP + protein L-histidine = ADP + protein N-phospho-L-histidine.. Functionally, member of the two-component regulatory system CusS/CusR involved in response to copper and silver. Acts as a copper/silver ion sensor. Activates CusR by phosphorylation. This Escherichia coli O6:H1 (strain CFT073 / ATCC 700928 / UPEC) protein is Sensor histidine kinase CusS (cusS).